The following is a 278-amino-acid chain: HTH-type transcriptional activator RhaS (278 aa).

The HTH araC/xylS-type domain maps to 174–272 (NQLLAWLEDH…DWSPRDIRQG (99 aa)). DNA-binding regions (H-T-H motif) lie at residues 191–212 (ESIA…KQQT) and 239–262 (VTDI…RREF).

As to quaternary structure, binds DNA as a dimer.

The protein localises to the cytoplasm. In terms of biological role, activates expression of the rhaBAD and rhaT operons. The sequence is that of HTH-type transcriptional activator RhaS from Citrobacter koseri (strain ATCC BAA-895 / CDC 4225-83 / SGSC4696).